Consider the following 224-residue polypeptide: uncharacterized protein (224 aa).

In terms of biological role, the presence of the two linear plasmids, termed pGKL1 and pGKL2, in strains of Kluyveromyces lactis confers the killer phenotype to the host cell, by promoting the secretion of a toxin able to inhibit the growth of sensitive strains. This is an uncharacterized protein from Kluyveromyces lactis (strain ATCC 8585 / CBS 2359 / DSM 70799 / NBRC 1267 / NRRL Y-1140 / WM37) (Yeast).